Here is a 566-residue protein sequence, read N- to C-terminus: MAPALAVTRDLTAVGSPENAPAKGRASVYSEVQSSRINNTLPLPSVLKGAFKIVEGPASSAAGNPDEIAKLFPGLYGQPSVAVVPDQDAPSSAPKLKIGVVLSGGQAPGGHNVISGLFDYLQERAKGSTFYGFKGGPAGIMKCKYVELNAEYIQPYRNQGGFDMICSGRDKIETPDQFKQAEETAKKLDLDGLVVIGGDDSNTNACLLAENFRSKNLKTRVIGCPKTIDGDLKCKEVPTSFGFDTACKIYSEMIGNVMIDARSTGKYYHFVRLMGRAASHITLECALQTHPNITIIGEEVSAQKQTLKNVTDYMVDVICKRAELGYNYGVILIPEGLIDFIPEVQELIAELNEILANEVVDENGLWKKKLTEQSLKLFDLLPEAIQEQLMLERDPHGNVQVAKIETEKMLIQMVETELEKRKQAGAYKGQFMGQSHFFGYEGRCGLPTNFDATYCYALGYGAGVLLNSGKTGLISSVGNLAAPVEEWTVGGTALTALMDVERRHGKFKPVIKKAMVELEGAPFKKFASLREEWALKNRYISPGPIQFTGPGSDSLSHTLLLELGAQ.

Ser-16 carries the post-translational modification Phosphoserine. Position 105 (Gly-105) interacts with diphosphate. Mg(2+) is bound at residue Asp-199. Residues 227 to 229, 266 to 267, 274 to 276, Glu-335, and 440 to 443 each bind substrate; these read TID, KY, MGR, and YEGR. Catalysis depends on Asp-229, which acts as the Proton acceptor.

The protein belongs to the phosphofructokinase type A (PFKA) family. PPi-dependent PFK group II subfamily. Clade 'Long' sub-subfamily. Tetramer of two alpha (regulatory) and two beta (catalytic) chains. The cofactor is Mg(2+).

The protein localises to the cytoplasm. The enzyme catalyses beta-D-fructose 6-phosphate + diphosphate = beta-D-fructose 1,6-bisphosphate + phosphate + H(+). Its pathway is carbohydrate degradation; glycolysis; D-glyceraldehyde 3-phosphate and glycerone phosphate from D-glucose: step 3/4. With respect to regulation, allosterically activated by fructose 2,6-bisphosphate. Its function is as follows. Catalytic subunit of pyrophosphate--fructose 6-phosphate 1-phosphotransferase. Catalyzes the phosphorylation of D-fructose 6-phosphate, the first committing step of glycolysis. Uses inorganic phosphate (PPi) as phosphoryl donor instead of ATP like common ATP-dependent phosphofructokinases (ATP-PFKs), which renders the reaction reversible, and can thus function both in glycolysis and gluconeogenesis. This is Pyrophosphate--fructose 6-phosphate 1-phosphotransferase subunit beta 1 from Arabidopsis thaliana (Mouse-ear cress).